The sequence spans 58 residues: Metallothionein (58 aa).

The interval 1-29 (PDPCCAEGTCECEEGKCKAGCKCTSCRCS) is beta. Cysteine 4, cysteine 5, cysteine 10, cysteine 12, cysteine 17, cysteine 21, cysteine 23, cysteine 26, cysteine 28, cysteine 31, cysteine 34, cysteine 38, cysteine 40, cysteine 46, cysteine 50, cysteine 54, cysteine 56, and cysteine 57 together coordinate a divalent metal cation. The interval 30 to 58 (PCEKCTSECECKSKEECAKNCTKPCSCCP) is alpha.

Functionally, metallothioneins have a high content of cysteine residues that bind various heavy metals. Class I MTS in crustacea are involved in the sequestration of elevated levels of heavy-metal ions. In Potamon potamios, this protein is Metallothionein.